Consider the following 252-residue polypeptide: Uridylate kinase (252 aa).

ATP is bound at residue lysine 20–glycine 23. The interval glycine 28–glycine 33 is involved in allosteric activation by GTP. Glycine 62 is a binding site for UMP. 2 residues coordinate ATP: glycine 63 and arginine 67. UMP contacts are provided by residues aspartate 82 and methionine 143–threonine 150. ATP contacts are provided by asparagine 171, tyrosine 177, and aspartate 180.

It belongs to the UMP kinase family. In terms of assembly, homohexamer.

The protein localises to the cytoplasm. The catalysed reaction is UMP + ATP = UDP + ADP. The protein operates within pyrimidine metabolism; CTP biosynthesis via de novo pathway; UDP from UMP (UMPK route): step 1/1. Its activity is regulated as follows. Allosterically activated by GTP. Inhibited by UTP. Its function is as follows. Catalyzes the reversible phosphorylation of UMP to UDP. The chain is Uridylate kinase from Streptomyces avermitilis (strain ATCC 31267 / DSM 46492 / JCM 5070 / NBRC 14893 / NCIMB 12804 / NRRL 8165 / MA-4680).